The chain runs to 466 residues: Catalase ifgD (466 aa).

The interval Met1–Ser22 is disordered. The active site involves His48. Tyr337 contacts heme.

It belongs to the catalase family. Requires heme as cofactor.

The protein operates within alkaloid biosynthesis; ergot alkaloid biosynthesis. In terms of biological role, catalase; part of the gene cluster that mediates the biosynthesis of isofumigaclavines, fungal ergot alkaloids. The tryptophan dimethylallyltransferase ifgA catalyzes the first step of ergot alkaloid biosynthesis by condensing dimethylallyl diphosphate (DMAP) and tryptophan to form 4-dimethylallyl-L-tryptophan. The second step is catalyzed by the methyltransferase ifgB that methylates 4-dimethylallyl-L-tryptophan in the presence of S-adenosyl-L-methionine, resulting in the formation of N-methyl-dimethylallyl-L-tryptophan. The catalase ifgD and the FAD-dependent oxidoreductase ifgC then transform N-methyl-dimethylallyl-L-tryptophan to chanoclavine-I which is further oxidized by ifgE in the presence of NAD(+), resulting in the formation of chanoclavine-I aldehyde. The chanoclavine-I aldehyde reductases ifgG and/or fgaOx3 reduce chanoclavine-I aldehyde to dihydrochanoclavine-I aldehyde that spontaneously dehydrates to form 6,8-dimethyl-6,7-didehydroergoline. The festuclavine dehydrogenases ifgF1 and/or ifgF2 then catalyze the reduction of 6,8-dimethyl-6,7-didehydroergoline to form festuclavine. Hydrolysis of festuclavine by a yet undetermined cytochrome P450 monooxygenase (called ifgH) then leads to the formation of isofumigaclavine B which is in turn acetylated by ifgI to isofumigaclavine A. Penicillium roqueforti has interestingly at least two sets of genes for the consumption of chanoclavine-I aldehyde on three different loci, the OYEs ifgG/fgaOx3 and the festuclavine synthase homologs ifgF1/ifgF2. The reason for the duplication of these genes is unclear, probably to ensure the conversion of chanoclavine-I aldehyde by differential gene expression under various environmental conditions. This chain is Catalase ifgD, found in Penicillium roqueforti (strain FM164).